Reading from the N-terminus, the 369-residue chain is 4-hydroxy-3-methylbut-2-en-1-yl diphosphate synthase (flavodoxin) (369 aa).

[4Fe-4S] cluster is bound by residues Cys-270, Cys-273, Cys-305, and Glu-312.

The protein belongs to the IspG family. It depends on [4Fe-4S] cluster as a cofactor.

The catalysed reaction is (2E)-4-hydroxy-3-methylbut-2-enyl diphosphate + oxidized [flavodoxin] + H2O + 2 H(+) = 2-C-methyl-D-erythritol 2,4-cyclic diphosphate + reduced [flavodoxin]. The protein operates within isoprenoid biosynthesis; isopentenyl diphosphate biosynthesis via DXP pathway; isopentenyl diphosphate from 1-deoxy-D-xylulose 5-phosphate: step 5/6. Functionally, converts 2C-methyl-D-erythritol 2,4-cyclodiphosphate (ME-2,4cPP) into 1-hydroxy-2-methyl-2-(E)-butenyl 4-diphosphate. The sequence is that of 4-hydroxy-3-methylbut-2-en-1-yl diphosphate synthase (flavodoxin) from Pseudomonas putida (strain W619).